Consider the following 2009-residue polypeptide: Sodium channel protein type 1 subunit alpha (2009 aa).

Topologically, residues 1-128 (MEQTVLVPPG…KIAIKILVHS (128 aa)) are cytoplasmic. Basic and acidic residues predominate over residues 28-48 (RIAEEKAKNPKPDKKDDDENG). A disordered region spans residues 28 to 60 (RIAEEKAKNPKPDKKDDDENGPKPNSDLEAGKN). Residues 110–454 (ILTPFNPLRK…QQMIEQLKKQ (345 aa)) form an I repeat. Residues 129 to 146 (LFSMLIMCTILTNCVFMT) form a helical membrane-spanning segment. At 147-152 (MSNPPD) the chain is on the extracellular side. The chain crosses the membrane as a helical span at residues 153-177 (WTKNVEYTFTGIYTFESLIKIIARG). Residues 178-188 (FCLEDFTFLRD) lie on the Cytoplasmic side of the membrane. Residues 189–205 (PWNWLDFTVITFAYVTE) traverse the membrane as a helical segment. Residues 206–213 (FVDLGNVS) lie on the Extracellular side of the membrane. A glycan (N-linked (GlcNAc...) asparagine) is linked at Asn211. A helical membrane pass occupies residues 214-235 (ALRTFRVLRALKTISVIPGLKT). The Cytoplasmic segment spans residues 236-245 (IVGALIQSVK). Residues 246-269 (KLSDVMILTVFCLSVFALIGLQLF) traverse the membrane as a helical segment. The Extracellular portion of the chain corresponds to 270 to 369 (MGNLRNKCIQ…YGYTSFDTFS (100 aa)). 2 disulfide bridges follow: Cys277-Cys345 and Cys336-Cys351. 5 N-linked (GlcNAc...) asparagine glycosylation sites follow: Asn284, Asn295, Asn301, Asn306, and Asn338. The segment at residues 370–384 (WAFLSLFRLMTQDFW) is an intramembrane region (pore-forming). Residues 385-397 (ENLYQLTLRAAGK) are Extracellular-facing. The helical transmembrane segment at 398–423 (TYMIFFVLVIFLGSFYLINLILAVVA) threads the bilayer. The Cytoplasmic segment spans residues 424–768 (MAYEEQNQAT…HVVNLVVMDP (345 aa)). Residues 455–529 (QEAAQQAATA…FQKSESEDSI (75 aa)) form a disordered region. The span at 456–466 (EAAQQAATATA) shows a compositional bias: low complexity. Position 470 is a phosphoserine (Ser470). Residues 479-492 (LSDSSSEASKLSSK) show a composition bias toward low complexity. The segment covering 495 to 506 (KERRNRRKKRKQ) has biased composition (basic residues). Basic and acidic residues predominate over residues 520 to 529 (FQKSESEDSI). 6 positions are modified to phosphoserine: Ser523, Ser525, Ser550, Ser551, Ser607, and Ser730. The tract at residues 584–627 (VGSENDFADDEHSTFEDNESRRDSLFVPRRHGERRNSNLSQTSR) is disordered. Residues 593–607 (DEHSTFEDNESRRDS) are compositionally biased toward basic and acidic residues. The stretch at 750–1022 (CSPYWLKVKH…QIAVDRMHKG (273 aa)) is one II repeat. A helical membrane pass occupies residues 769-787 (FVDLAITICIVLNTLFMAM). Topologically, residues 788 to 797 (EHYPMTDHFN) are extracellular. A helical transmembrane segment spans residues 798 to 820 (NVLTVGNLVFTGIFTAEMFLKII). The Cytoplasmic portion of the chain corresponds to 821–830 (AMDPYYYFQE). Residues 831-849 (GWNIFDGFIVTLSLVELGL) form a helical membrane-spanning segment. Residues 850-854 (ANVEG) lie on the Extracellular side of the membrane. A helical membrane pass occupies residues 855–874 (LSVLRSFRLLRVFKLAKSWP). Residues 875 to 891 (TLNMLIKIIGNSVGALG) are Cytoplasmic-facing. The helical transmembrane segment at 892–912 (NLTLVLAIIVFIFAVVGMQLF) threads the bilayer. Over 913 to 938 (GKSYKDCVCKIASDCQLPRWHMNDFF) the chain is Extracellular. Cys921 and Cys927 are joined by a disulfide. The pore-forming intramembrane region spans 939–952 (HSFLIVFRVLCGEW). The Extracellular segment spans residues 953–965 (IETMWDCMEVAGQ). Cys959 and Cys968 form a disulfide bridge. A helical membrane pass occupies residues 966 to 992 (AMCLTVFMMVMVIGNLVVLNLFLALLL). The Cytoplasmic segment spans residues 993 to 1218 (SSFSADNLAA…RTCFRIVEHN (226 aa)). The disordered stretch occupies residues 1129–1163 (TEDFSSESDLEESKEKLNESSSSSEGSTVDIGAPV). One copy of the III repeat lies at 1200-1514 (RGKQWWNLRR…KKYYNAMKKL (315 aa)). The chain crosses the membrane as a helical span at residues 1219 to 1237 (WFETFIVFMILLSSGALAF). The Extracellular segment spans residues 1238–1250 (EDIYIDQRKTIKT). The helical transmembrane segment at 1251 to 1276 (MLEYADKVFTYIFILEMLLKWVAYGY) threads the bilayer. Over 1277-1278 (QT) the chain is Cytoplasmic. A helical transmembrane segment spans residues 1279 to 1304 (YFTNAWCWLDFLIVDVSLVSLTANAL). Over 1305-1313 (GYSELGAIK) the chain is Extracellular. The chain crosses the membrane as a helical span at residues 1314–1332 (SLRTLRALRPLRALSRFEG). Residues 1333–1345 (MRVVVNALLGAIP) are Cytoplasmic-facing. The helical transmembrane segment at 1346-1369 (SIMNVLLVCLIFWLIFSIMGVNLF) threads the bilayer. At 1370-1415 (AGKFYHCINTTTGDRFDIEDVNNHTDCLKLIERNETARWKNVKVNF) the chain is on the extracellular side. The cysteines at positions 1376 and 1396 are disulfide-linked. N-linked (GlcNAc...) asparagine glycans are attached at residues Asn1378, Asn1392, and Asn1403. The segment at residues 1416 to 1433 (DNVGFGYLSLLQVATFKG) is an intramembrane region (pore-forming). The Extracellular segment spans residues 1434-1457 (WMDIMYAAVDSRNVELQPKYEESL). A helical membrane pass occupies residues 1458–1483 (YMYLYFVIFIIFGSFFTLNLFIGVII). Residues 1484 to 1541 (DNFNQQKKKFGGQDIFMTEEQKKYYNAMKKLGSKKPQKPIPRPGNKFQGMVFDFVTRQ) lie on the Cytoplasmic side of the membrane. A Phosphoserine; by PKC modification is found at Ser1516. The stretch at 1523–1821 (IPRPGNKFQG…WEKFDPDATQ (299 aa)) is one IV repeat. Residues 1542–1560 (VFDISIMILICLNMVTMMV) form a helical membrane-spanning segment. The Extracellular segment spans residues 1561 to 1571 (ETDDQSEYVTT). Positions 1561-1571 (ETDDQSEYVTT) are S1-S2 loop of repeat IV. The helical transmembrane segment at 1572-1593 (ILSRINLVFIVLFTGECVLKLI) threads the bilayer. The Cytoplasmic segment spans residues 1594-1601 (SLRHYYFT). A helical membrane pass occupies residues 1602–1623 (IGWNIFDFVVVILSIVGMFLAE). The interval 1619–1636 (MFLAELIEKYFVSPTLFR) is S3b-S4 loop of repeat IV. Over 1624–1636 (LIEKYFVSPTLFR) the chain is Extracellular. The chain crosses the membrane as a helical span at residues 1637 to 1655 (VIRLARIGRILRLIKGAKG). Residues 1656 to 1665 (IRTLLFALMM) are Cytoplasmic-facing. Residues 1666–1688 (SLPALFNIGLLLFLVMFIYAIFG) traverse the membrane as a helical segment. Residues 1689–1711 (MSNFAYVKREVGIDDMFNFETFG) are Extracellular-facing. The segment at residues 1712–1726 (NSMICLFQITTSAGW) is an intramembrane region (pore-forming). Residues 1727-1759 (DGLLAPILNSKPPDCDPNKVNPGSSVKGDCGNP) are Extracellular-facing. Cys1741 and Cys1756 form a disulfide bridge. Residues 1760 to 1788 (SVGIFFFVSYIIISFLVVVNMYIAVILEN) form a helical membrane-spanning segment. The Cytoplasmic portion of the chain corresponds to 1789-2009 (FSVATEESAE…EGKDEKAKGK (221 aa)). Positions 1915-1944 (EEVSAVIIQRAYRRHLLKRTVKQASFTYNK) constitute an IQ domain. The interval 1986-2009 (YDRVTKPIVEKHEQEGKDEKAKGK) is disordered. Residues 1988–2009 (RVTKPIVEKHEQEGKDEKAKGK) are compositionally biased toward basic and acidic residues.

The protein belongs to the sodium channel (TC 1.A.1.10) family. Nav1.1/SCN1A subfamily. In terms of assembly, the Nav1.1 voltage-gated sodium channel consists of an ion-conducting alpha subunit SCN1A which is functional on its own regulated by one or more beta-1 (SCN1B), beta-2 (SCN2B), beta-3 (SCN3B) and beta-4 (SCN4B) subunits. SCN1B and SCN3B are non-covalently associated with SCN1A. SCN2B and SCN4B are disulfide-linked to SCN1A. SCN1B regulates both the expression at the plasma membrane and the voltage dependence of Nav1.1 inactivation. SCN3B and SCN4B reduce Nav1.1 conductance. Probably interacts with TMEM233; modulates the gating properties of NaV1.1. Interacts with FGF13; regulates the steady-state inactivation of Nav.1.1. Phosphorylation at Ser-1516 by PKC in a highly conserved cytoplasmic loop slows inactivation of the sodium channel and reduces peak sodium currents.

It is found in the cell membrane. It catalyses the reaction Na(+)(in) = Na(+)(out). Activated by the spider toxins Hm1a and Hm1b (H.maculata, AC P60992 and AC P0DOC5) eliciting acute pain and mechanical allodynia. Inhibited by the conotoxin GVIIJ. Inhibited by the spider beta/delta-theraphotoxin-Pre1a. Functionally, pore-forming subunit of Nav1.1, a voltage-gated sodium (Nav) channel that directly mediates the depolarizing phase of action potentials in excitable membranes. Navs, also called VGSCs (voltage-gated sodium channels) or VDSCs (voltage-dependent sodium channels), operate by switching between closed and open conformations depending on the voltage difference across the membrane. In the open conformation they allow Na(+) ions to selectively pass through the pore, along their electrochemical gradient. The influx of Na(+) ions provokes membrane depolarization, initiating the propagation of electrical signals throughout cells and tissues. By regulating the excitability of neurons, ensures that they respond appropriately to synaptic inputs, maintaining the balance between excitation and inhibition in brain neural circuits. Nav1.1 plays a role in controlling the excitability and action potential propagation from somatosensory neurons, thereby contributing to the sensory perception of mechanically-induced pain. The protein is Sodium channel protein type 1 subunit alpha of Homo sapiens (Human).